The following is a 275-amino-acid chain: tRNA pseudouridine synthase A (275 aa).

The Nucleophile role is filled by aspartate 55. Substrate is bound at residue tyrosine 111.

The protein belongs to the tRNA pseudouridine synthase TruA family.

It catalyses the reaction uridine(38/39/40) in tRNA = pseudouridine(38/39/40) in tRNA. Formation of pseudouridine at positions 38, 39 and 40 in the anticodon stem and loop of transfer RNAs. The sequence is that of tRNA pseudouridine synthase A from Methanococcoides burtonii (strain DSM 6242 / NBRC 107633 / OCM 468 / ACE-M).